The primary structure comprises 95 residues: CRISPR-associated endoribonuclease Cas2 3 (95 aa).

Position 7 (Asp7) interacts with Mg(2+).

This sequence belongs to the CRISPR-associated endoribonuclease Cas2 protein family. Homodimer, forms a heterotetramer with a Cas1 homodimer. Mg(2+) serves as cofactor.

Functionally, CRISPR (clustered regularly interspaced short palindromic repeat), is an adaptive immune system that provides protection against mobile genetic elements (viruses, transposable elements and conjugative plasmids). CRISPR clusters contain sequences complementary to antecedent mobile elements and target invading nucleic acids. CRISPR clusters are transcribed and processed into CRISPR RNA (crRNA). Functions as a ssRNA-specific endoribonuclease. Involved in the integration of spacer DNA into the CRISPR cassette. The polypeptide is CRISPR-associated endoribonuclease Cas2 3 (Rhodospirillum rubrum (strain ATCC 11170 / ATH 1.1.1 / DSM 467 / LMG 4362 / NCIMB 8255 / S1)).